The following is a 411-amino-acid chain: POU domain, class 4, transcription factor 2 (411 aa).

Positions 29 to 95 are disordered; it reads LHSASPGSSA…SEAMRRACLP (67 aa). The segment covering 31 to 52 has biased composition (low complexity); it reads SASPGSSAPAAPSASSPSSSSN. 2 stretches are compositionally biased toward gly residues: residues 53-68 and 76-86; these read AGGG…GGGR and GSGGSGGGGGS. A required for transcriptional activation region spans residues 93–239; it reads CLPTPPSNIF…MHQAALSMAH (147 aa). A POU-IV box motif is present at residues 112–121; the sequence is RAEALAAVDI. Residues 154–168 are compositionally biased toward low complexity; sequence SAASSSSVPISHPSA. The tract at residues 154 to 190 is disordered; it reads SAASSSSVPISHPSALAGTHHHHHHHHHHHHQPHQAL. Residues 172–186 show a composition bias toward basic residues; the sequence is THHHHHHHHHHHHQP. Residues 173 to 187 carry the Nuclear speckle targeting signal motif; it reads HHHHHHHHHHHHQPH. A required for DNA-binding and transcriptional repression region spans residues 240-411; the sequence is AHGLPSHMGC…QKRMKYSAGI (172 aa). In terms of domain architecture, POU-specific spans 252-329; it reads DVDADPRDLE…ILQAWLEEAE (78 aa). The homeobox DNA-binding region spans 347-406; it reads KKRKRTSIAAPEKRSLEAYFAIQPRPSSEKIAAIAEKLDLKKNVVRVWFCNQRQKQKRMK.

The protein belongs to the POU transcription factor family. Class-4 subfamily. As to quaternary structure, isoform 2: Interacts with POU4F1 isoform 1; this interaction inhibits both POU4F1 DNA-binding and transcriptional activities. Isoform 2: Interacts (C-terminus) with ESR1 (via DNA-binding domain); this interaction increases the estrogen receptor ESR1 transcriptional activity in a DNA- and ligand 17-beta-estradiol-independent manner. Isoform 2: Interacts (via C-terminus) with TP53 (via N-terminus). Interacts with DLX1 (via homeobox DNA-binding domain); this interaction suppresses DLX1-mediated transcriptional activity in postnatal retina enhancing retinal ganglion cell (RGC) differentiation. Interacts with DLX2 (via homeobox DNA-binding domain); this interaction enhances RGC differentiation. Isoform 1: Interacts (via C-terminus) with ISL1 (via C-terminus). Isoform 1: Interacts with ISL2. Isoform 1: Interacts with LHX2. In terms of tissue distribution, expressed in retinal ganglion cells (RGCs). Expressed in mature osteoclasts. Expressed in cells of layers of the superior colliculus and the adjacent periaqueductal gray (at protein level). Expressed in the brain, peripheral sensory nervous system and retina. Expressed in the optical, intermediate, and deep gray areas of the superior colliculus, the dorsal column of the mesencephalic and pontine central gray, and the lateral interpeduncular nucleus of the brain. Expressed predominantly in postmitotic, terminally differentiated neurons. Expressed in ganglion cell layer (GCL) of the retina.

It localises to the nucleus. Its subcellular location is the nucleus speckle. The protein localises to the cytoplasm. Tissue-specific DNA-binding transcription factor involved in the development and differentiation of target cells. Functions either as activator or repressor by modulating the rate of target gene transcription through RNA polymerase II enzyme in a promoter-dependent manner. Binds to the consensus octamer motif 5'-AT[A/T]A[T/A]T[A/T]A-3' of promoter of target genes. Plays a fundamental role in the gene regulatory network essential for retinal ganglion cell (RGC) differentiation. Binds to an octamer site to form a ternary complex with ISL1; cooperates positively with ISL1 and ISL2 to potentiate transcriptional activation of RGC target genes being involved in RGC fate commitment in the developing retina and RGC axon formation and pathfinding. Inhibits DLX1 and DLX2 transcriptional activities preventing DLX1- and DLX2-mediated ability to promote amacrine cell fate specification. In cooperation with TP53 potentiates transcriptional activation of BAX promoter activity increasing neuronal cell apoptosis. Negatively regulates BAX promoter activity in the absence of TP53. Acts as a transcriptional coactivator via its interaction with the transcription factor ESR1 by enhancing its effect on estrogen response element (ERE)-containing promoter. Antagonizes the transcriptional stimulatory activity of POU4F1 by preventing its binding to an octamer motif. Involved in TNFSF11-mediated terminal osteoclast differentiation. In Mus musculus (Mouse), this protein is POU domain, class 4, transcription factor 2.